Here is a 251-residue protein sequence, read N- to C-terminus: Pyrroloquinoline-quinone synthase (251 aa).

Belongs to the PqqC family.

It carries out the reaction 6-(2-amino-2-carboxyethyl)-7,8-dioxo-1,2,3,4,7,8-hexahydroquinoline-2,4-dicarboxylate + 3 O2 = pyrroloquinoline quinone + 2 H2O2 + 2 H2O + H(+). It functions in the pathway cofactor biosynthesis; pyrroloquinoline quinone biosynthesis. Functionally, ring cyclization and eight-electron oxidation of 3a-(2-amino-2-carboxyethyl)-4,5-dioxo-4,5,6,7,8,9-hexahydroquinoline-7,9-dicarboxylic-acid to PQQ. In Klebsiella pneumoniae (strain 342), this protein is Pyrroloquinoline-quinone synthase.